The primary structure comprises 875 residues: Alanine--tRNA ligase (875 aa).

Residues His-565, His-569, Cys-666, and His-670 each coordinate Zn(2+).

This sequence belongs to the class-II aminoacyl-tRNA synthetase family. Zn(2+) is required as a cofactor.

It is found in the cytoplasm. The enzyme catalyses tRNA(Ala) + L-alanine + ATP = L-alanyl-tRNA(Ala) + AMP + diphosphate. In terms of biological role, catalyzes the attachment of alanine to tRNA(Ala) in a two-step reaction: alanine is first activated by ATP to form Ala-AMP and then transferred to the acceptor end of tRNA(Ala). Also edits incorrectly charged Ser-tRNA(Ala) and Gly-tRNA(Ala) via its editing domain. The polypeptide is Alanine--tRNA ligase (Leptothrix cholodnii (strain ATCC 51168 / LMG 8142 / SP-6) (Leptothrix discophora (strain SP-6))).